The primary structure comprises 305 residues: NAD kinase 2 (305 aa).

Residue aspartate 78 is the Proton acceptor of the active site. Residues 78–79 (DG), 152–153 (NE), aspartate 182, 193–198 (TAYSLS), and asparagine 251 contribute to the NAD(+) site.

The protein belongs to the NAD kinase family. A divalent metal cation serves as cofactor.

It localises to the cytoplasm. The catalysed reaction is NAD(+) + ATP = ADP + NADP(+) + H(+). In terms of biological role, involved in the regulation of the intracellular balance of NAD and NADP, and is a key enzyme in the biosynthesis of NADP. Catalyzes specifically the phosphorylation on 2'-hydroxyl of the adenosine moiety of NAD to yield NADP. In Synechococcus sp. (strain ATCC 27144 / PCC 6301 / SAUG 1402/1) (Anacystis nidulans), this protein is NAD kinase 2.